Consider the following 212-residue polypeptide: Ribonuclease HII (212 aa).

The 204-residue stretch at 1-204 (MRVGIDEAGR…LRSTAPLYYI (204 aa)) folds into the RNase H type-2 domain. Residues Asp-6, Glu-7, and Asp-103 each coordinate a divalent metal cation.

This sequence belongs to the RNase HII family. It depends on Mn(2+) as a cofactor. Requires Mg(2+) as cofactor.

It localises to the cytoplasm. It catalyses the reaction Endonucleolytic cleavage to 5'-phosphomonoester.. Endonuclease that specifically degrades the RNA of RNA-DNA hybrids. The sequence is that of Ribonuclease HII from Saccharolobus solfataricus (strain ATCC 35092 / DSM 1617 / JCM 11322 / P2) (Sulfolobus solfataricus).